A 362-amino-acid chain; its full sequence is Peptide chain release factor 1 (362 aa).

Glutamine 240 carries the N5-methylglutamine modification.

It belongs to the prokaryotic/mitochondrial release factor family. Methylated by PrmC. Methylation increases the termination efficiency of RF1.

The protein localises to the cytoplasm. Peptide chain release factor 1 directs the termination of translation in response to the peptide chain termination codons UAG and UAA. The protein is Peptide chain release factor 1 of Bifidobacterium longum subsp. infantis (strain ATCC 15697 / DSM 20088 / JCM 1222 / NCTC 11817 / S12).